Consider the following 778-residue polypeptide: ATP synthase subunit beta (778 aa).

A unknown region spans residues 1-289 (MKENNKTIEA…IDIYEENEDL (289 aa)). Positions 290-778 (MKLNTLKSDK…KPLNSENKSN (489 aa)) are ATP synthase subunit beta. 447-454 (GGAGVGKT) is an ATP binding site.

Belongs to the ATPase alpha/beta chains family. As to quaternary structure, F-type ATPases have 2 components, CF(1) - the catalytic core - and CF(0) - the membrane proton channel. CF(1) has five subunits: alpha(3), beta(3), gamma(1), delta(1), epsilon(1). CF(0) has three main subunits: a(1), b(2) and c(9-12). The alpha and beta chains form an alternating ring which encloses part of the gamma chain. CF(1) is attached to CF(0) by a central stalk formed by the gamma and epsilon chains, while a peripheral stalk is formed by the delta and b chains.

Its subcellular location is the cell membrane. The catalysed reaction is ATP + H2O + 4 H(+)(in) = ADP + phosphate + 5 H(+)(out). Its function is as follows. Produces ATP from ADP in the presence of a proton gradient across the membrane. The catalytic sites are hosted primarily by the beta subunits. The protein is ATP synthase subunit beta (atpD) of Malacoplasma penetrans (strain HF-2) (Mycoplasma penetrans).